The sequence spans 217 residues: GTP-binding protein yptV2 (217 aa).

Residue 20–27 participates in GTP binding; that stretch reads GDSGVGKS. The Effector region signature appears at 42–50; that stretch reads FITTIGIDF. Residues 68 to 72 and 126 to 129 contribute to the GTP site; these read DTAGQ and NKLD. The tract at residues 198–217 is disordered; it reads QPVRLTSGSPSPAQGKSCCR. Positions 201-211 are enriched in polar residues; that stretch reads RLTSGSPSPAQ. S-geranylgeranyl cysteine attachment occurs at residues cysteine 215 and cysteine 216.

Belongs to the small GTPase superfamily. Rab family.

The protein resides in the cell membrane. Its function is as follows. Protein transport. Probably involved in vesicular traffic. The sequence is that of GTP-binding protein yptV2 (YPTV2) from Volvox carteri (Green alga).